The sequence spans 130 residues: Small ribosomal subunit protein uS9 (130 aa).

The protein belongs to the universal ribosomal protein uS9 family.

The sequence is that of Small ribosomal subunit protein uS9 from Ralstonia nicotianae (strain ATCC BAA-1114 / GMI1000) (Ralstonia solanacearum).